The following is a 60-amino-acid chain: Potassium channel toxin MeuTXKalpha3 (60 aa).

The N-terminal stretch at 1 to 22 (MKNYCGIITLFLAIISATGVFC) is a signal peptide. 3 disulfides stabilise this stretch: cysteine 32–cysteine 50, cysteine 37–cysteine 55, and cysteine 41–cysteine 57. Proline 59 carries the post-translational modification Proline amide.

This sequence belongs to the short scorpion toxin superfamily. Potassium channel inhibitor family. Expressed by the venom gland.

The protein localises to the secreted. May block voltage-gated potassium channels (Kv). The sequence is that of Potassium channel toxin MeuTXKalpha3 from Mesobuthus eupeus (Lesser Asian scorpion).